We begin with the raw amino-acid sequence, 20 residues long: Putative beta-neurotoxin (20 aa).

An LCN-type CS-alpha/beta domain is found at 1–20 (KDGYLVGSDGCKYSCLTRPG).

Expressed by the venom gland.

It is found in the secreted. Beta toxins bind voltage-independently at site-4 of sodium channels (Nav) and shift the voltage of activation toward more negative potentials thereby affecting sodium channel activation and promoting spontaneous and repetitive firing. The chain is Putative beta-neurotoxin from Tityus pachyurus (Colombian scorpion).